The following is a 266-amino-acid chain: Protein crossbronx-like (266 aa).

The UBC core domain occupies 15-178; that stretch reads KQGYKILAEY…IQELAISSRR (164 aa). A disordered region spans residues 216–266; it reads EATCEDDSPPAELLGHIDSSRQLDEDEANQRGKLQAATTDLQHGARCSVAQ.

Belongs to the ubiquitin-conjugating enzyme family. FTS subfamily.

The chain is Protein crossbronx-like from Drosophila ananassae (Fruit fly).